The chain runs to 304 residues: MQIIVKNISYIYNRKTALALKALDDSSCIINQGEHVAIIGSTGSGKTTFIEHLNALLIPETGTINWIFENEHKKTKEKYLEDVVLKRTYFKKVKKAKDIRRRIGVVFQFAEYQIFEETIEKDIMFGPRSYGVSKEEAKQRAAKYLEMVGLPLEFLEKNPFGLSGGQKRRVALAGILAIEPDFLVLDEPTAGLDPQGVKDILDIFDNINKNGKTVIMVTHDLDNVLERTKRTLVFDKGKLIRDAGTYEILKDEKFLVENKLKSPKLITFVNKLEQRGIFLKPVTSIDKLAIELNIYLRNKQQSNE.

The ABC transporter domain occupies 3 to 261 (IIVKNISYIY…EKFLVENKLK (259 aa)). 40-47 (GSTGSGKT) provides a ligand contact to ATP.

It belongs to the ABC transporter superfamily. Energy-coupling factor EcfA family. Forms a stable energy-coupling factor (ECF) transporter complex composed of 2 membrane-embedded substrate-binding proteins (S component), 2 ATP-binding proteins (A component) and 2 transmembrane proteins (T component).

It localises to the cell membrane. In terms of biological role, ATP-binding (A) component of a common energy-coupling factor (ECF) ABC-transporter complex. Unlike classic ABC transporters this ECF transporter provides the energy necessary to transport a number of different substrates. This chain is Energy-coupling factor transporter ATP-binding protein EcfA2, found in Mycoplasmopsis pulmonis (strain UAB CTIP) (Mycoplasma pulmonis).